The primary structure comprises 31 residues: Spectrin beta chain, non-erythrocytic 1 (31 aa).

Spectrin repeat units lie at residues 1-10, 11-19, and 20-31; these read VLLLSQDYGK, YKEVAELTR, and TQILAASYELHK. Tyr-27 is modified (phosphotyrosine).

The protein belongs to the spectrin family. Interacts with ANK2. Interacts with CPNE4 (via VWFA domain). Like erythrocyte spectrin, the spectrin-like proteins are capable to form dimers which can further associate to tetramers. Associates with the gamma-tubulin complex in brain, but not in kidney, liver, sperm, or uterus. Interacts with CAMSAP1. Can form heterodimers with SPTAN1.

The protein localises to the cytoplasm. Its subcellular location is the cytoskeleton. The protein resides in the myofibril. It is found in the sarcomere. It localises to the m line. The protein localises to the cytosol. Its subcellular location is the cell membrane. Fodrin, which seems to be involved in secretion, interacts with calmodulin in a calcium-dependent manner and is thus candidate for the calcium-dependent movement of the cytoskeleton at the membrane. Plays a critical role in central nervous system development and function. This is Spectrin beta chain, non-erythrocytic 1 (SPTBN1) from Capra hircus (Goat).